A 183-amino-acid polypeptide reads, in one-letter code: UPF0316 protein EF_1609 (183 aa).

A run of 3 helical transmembrane segments spans residues 1-21, 35-55, and 62-82; these read MVVD…YITL, VIAP…LSMV, and PLNL…GIKI.

It belongs to the UPF0316 family.

Its subcellular location is the cell membrane. The chain is UPF0316 protein EF_1609 from Enterococcus faecalis (strain ATCC 700802 / V583).